The following is a 1333-amino-acid chain: Partitioning defective 3 homolog (1333 aa).

Position 25 is a phosphoserine (Ser-25). A Phosphothreonine modification is found at Thr-91. Residues 143-262 (SSDPALTGLS…VGHADTGLEN (120 aa)) are disordered. 2 stretches are compositionally biased toward polar residues: residues 150-163 (GLSTSVSDNNFSSE) and 171-187 (TRWSTTAGFLKQNTAGS). 2 positions are modified to phosphoserine: Ser-156 and Ser-174. Basic and acidic residues predominate over residues 190–203 (TCDRKKDENYRSLP). Residues 207–224 (SSWSNQFQRDNARSSLSA) show a composition bias toward polar residues. The region spanning 271 to 359 (MVKLVQVPND…ARVIWFHVVP (89 aa)) is the PDZ 1 domain. Disordered regions lie at residues 369-388 (LSQREKNNYSPGRFSPDSHC) and 397-441 (NAPQ…APPS). Ser-383 is modified (phosphoserine). PDZ domains are found at residues 461–546 (NIQL…LVFR) and 590–677 (EVPL…GMIQ). Tyr-489 bears the Phosphotyrosine mark. Residues Ser-692, Ser-695, Ser-715, Ser-728, Ser-806, and Ser-824 each carry the phosphoserine modification. 2 interaction with PRKCI and PRKCZ regions span residues 712–932 (RRIS…YDKP) and 712–936 (RRIS…MVDD). At Lys-831 the chain carries N6-acetyllysine. The residue at position 834 (Ser-834) is a Phosphoserine. At Lys-848 the chain carries N6-acetyllysine. Ser-849 and Ser-869 each carry phosphoserine. 5 disordered regions span residues 861 to 884 (TVDDQRAGSPSRDVGPSLGLKKSS), 928 to 1011 (SYDK…AKKG), 1024 to 1071 (KHRK…ERQA), 1110 to 1267 (PQSP…LGGH), and 1283 to 1333 (QEQR…PFYS). The residue at position 881 (Lys-881) is an N6-acetyllysine. The tract at residues 931-1333 (KPMVDDDDEG…TPEKGRPFYS (403 aa)) is interaction with FRMD4A. Residues 935-949 (DDDDEGMETLEEDTE) are compositionally biased toward acidic residues. Ser-958 carries the phosphoserine; by AURKA modification. 2 positions are modified to phosphoserine: Ser-967 and Ser-969. Composition is skewed to basic and acidic residues over residues 977–1005 (DPEKRDKTERKKDKAGKDKKKDREKEKDK) and 1026–1039 (RKDDKMEKMGRIKI). A Phosphoserine modification is found at Ser-1042. Over residues 1046–1071 (EEDRVRMKEEQERIQAKTREFRERQA) the composition is skewed to basic and acidic residues. Residues 1046–1078 (EEDRVRMKEEQERIQAKTREFRERQARERDYAE) are a coiled coil. Residues 1134-1143 (PGDSNRSTPS) are compositionally biased toward polar residues. Over residues 1144-1171 (NHDRIQRLRQEFQQAKQDEDVEDRRRTY) the composition is skewed to basic and acidic residues. 3 coiled-coil regions span residues 1145–1168 (HDRIQRLRQEFQQAKQDEDVEDRR), 1195–1218 (VQVQRQRQEERESFQQAQRQYSSL), and 1274–1295 (MLETQELLRQEQRRKEQQLKKQ). Positions 1176–1199 (SWSSSRPASQSGRHSVSVEVQVQR) are enriched in low complexity. Positions 1215-1236 (YSSLPRQSRKNASSISQDSWEQ) are enriched in polar residues. Positions 1283–1292 (QEQRRKEQQL) are enriched in basic and acidic residues. A compositionally biased stretch (polar residues) spans 1314-1323 (SQVARLNRLQ). Residues 1324–1333 (TPEKGRPFYS) show a composition bias toward basic and acidic residues. Lys-1327 carries the post-translational modification N6-acetyllysine.

The protein belongs to the PAR3 family. As to quaternary structure, interacts with PRCKI and CDH5. Interacts (via PDZ 3 domain) with PTEN (via C-terminus). Component of a complex whose core is composed of ARHGAP17, AMOT, PALS1, PATJ and PARD3/PAR3. Interacts with LIMK2, AURKA and AURKB. Component of the Par polarity complex, composed of at least phosphorylated PRKCZ, PARD3 and TIAM1. Interacts with ECT2 and FBF1. Interacts (via PDZ 1 domain) with F11R/JAM1, PARD6A and PARD6B. Part of a complex with PARD6A or PARD6B, PRKCI or PRKCZ and CDC42 or RAC1. Directly interacts with TIAM1 and TIAM2. Interacts with SIRT2. Interacts (via coiled-coil domain) with FRMD4A. Found in a complex with PARD3, CYTH1 and FRMD4A. Interacts with SAPCD2. Interacts with PRKCA. Interacts with PRKCZ. Post-translationally, acetylated. Deacetylated by SIRT2, thereby inhibiting Schwann cell peripheral myelination. In terms of processing, phosphorylation at Ser-824 by PRKCZ and PRKCI occurs at the most apical tip of epithelial cell-cell contacts during the initial phase of tight junction formation and may promote dissociation of the complex with PARD6. EGF-induced Tyr-1123 phosphorylation mediates dissociation from LIMK2. Phosphorylation by AURKA at Ser-958 is required for the normal establishment of neuronal polarity. Isoform 4 and isoform 5 are phosphorylated during oocyte maturation. In terms of tissue distribution, all isoforms are expressed in heart, while expression in brain is mainly limited to isoform 1, and to isoform 3 to a weaker level.

The protein resides in the cytoplasm. It localises to the endomembrane system. The protein localises to the cell junction. It is found in the tight junction. Its subcellular location is the adherens junction. The protein resides in the cell cortex. It localises to the cytoskeleton. The protein localises to the cell membrane. In terms of biological role, adapter protein involved in asymmetrical cell division and cell polarization processes. Seems to play a central role in the formation of epithelial tight junctions. Targets the phosphatase PTEN to cell junctions. Association with PARD6B may prevent the interaction of PARD3 with F11R/JAM1, thereby preventing tight junction assembly. The PARD6-PARD3 complex links GTP-bound Rho small GTPases to atypical protein kinase C proteins. Required for establishment of neuronal polarity and normal axon formation in cultured hippocampal neurons. Involved in Schwann cell peripheral myelination. This chain is Partitioning defective 3 homolog (Pard3), found in Mus musculus (Mouse).